The sequence spans 98 residues: Large ribosomal subunit protein bL28 (98 aa).

This sequence belongs to the bacterial ribosomal protein bL28 family.

The sequence is that of Large ribosomal subunit protein bL28 from Thermus thermophilus (strain ATCC BAA-163 / DSM 7039 / HB27).